A 232-amino-acid polypeptide reads, in one-letter code: Phosphatidylserine decarboxylase proenzyme (232 aa).

The active-site Schiff-base intermediate with substrate; via pyruvic acid is the Ser-190. The residue at position 190 (Ser-190) is a Pyruvic acid (Ser); by autocatalysis.

This sequence belongs to the phosphatidylserine decarboxylase family. PSD-A subfamily. In terms of assembly, heterodimer of a large membrane-associated beta subunit and a small pyruvoyl-containing alpha subunit. The cofactor is pyruvate. Is synthesized initially as an inactive proenzyme. Formation of the active enzyme involves a self-maturation process in which the active site pyruvoyl group is generated from an internal serine residue via an autocatalytic post-translational modification. Two non-identical subunits are generated from the proenzyme in this reaction, and the pyruvate is formed at the N-terminus of the alpha chain, which is derived from the carboxyl end of the proenzyme. The post-translation cleavage follows an unusual pathway, termed non-hydrolytic serinolysis, in which the side chain hydroxyl group of the serine supplies its oxygen atom to form the C-terminus of the beta chain, while the remainder of the serine residue undergoes an oxidative deamination to produce ammonia and the pyruvoyl prosthetic group on the alpha chain.

It is found in the cell membrane. It carries out the reaction a 1,2-diacyl-sn-glycero-3-phospho-L-serine + H(+) = a 1,2-diacyl-sn-glycero-3-phosphoethanolamine + CO2. The protein operates within phospholipid metabolism; phosphatidylethanolamine biosynthesis; phosphatidylethanolamine from CDP-diacylglycerol: step 2/2. Its function is as follows. Catalyzes the formation of phosphatidylethanolamine (PtdEtn) from phosphatidylserine (PtdSer). In Beijerinckia indica subsp. indica (strain ATCC 9039 / DSM 1715 / NCIMB 8712), this protein is Phosphatidylserine decarboxylase proenzyme.